Here is a 450-residue protein sequence, read N- to C-terminus: tRNA-2-methylthio-N(6)-dimethylallyladenosine synthase (450 aa).

Residues 14 to 132 (GEFFIETWGC…FPNYLNEVKK (119 aa)) form the MTTase N-terminal domain. Cys23, Cys59, Cys93, Cys169, Cys173, and Cys176 together coordinate [4Fe-4S] cluster. In terms of domain architecture, Radical SAM core spans 155 to 385 (RKNSMKAFVT…VEVVNEISAK (231 aa)). Residues 388–450 (KAYEGKIEEV…NSFSLTGEEI (63 aa)) enclose the TRAM domain.

The protein belongs to the methylthiotransferase family. MiaB subfamily. As to quaternary structure, monomer. Requires [4Fe-4S] cluster as cofactor.

The protein resides in the cytoplasm. It catalyses the reaction N(6)-dimethylallyladenosine(37) in tRNA + (sulfur carrier)-SH + AH2 + 2 S-adenosyl-L-methionine = 2-methylsulfanyl-N(6)-dimethylallyladenosine(37) in tRNA + (sulfur carrier)-H + 5'-deoxyadenosine + L-methionine + A + S-adenosyl-L-homocysteine + 2 H(+). Functionally, catalyzes the methylthiolation of N6-(dimethylallyl)adenosine (i(6)A), leading to the formation of 2-methylthio-N6-(dimethylallyl)adenosine (ms(2)i(6)A) at position 37 in tRNAs that read codons beginning with uridine. This is tRNA-2-methylthio-N(6)-dimethylallyladenosine synthase from Clostridium botulinum (strain Okra / Type B1).